A 215-amino-acid chain; its full sequence is Ribosomal RNA small subunit methyltransferase G (215 aa).

S-adenosyl-L-methionine-binding positions include Gly-78, Leu-83, 128 to 129 (AE), and Arg-146.

The protein belongs to the methyltransferase superfamily. RNA methyltransferase RsmG family.

The protein resides in the cytoplasm. The enzyme catalyses guanosine(527) in 16S rRNA + S-adenosyl-L-methionine = N(7)-methylguanosine(527) in 16S rRNA + S-adenosyl-L-homocysteine. Its function is as follows. Specifically methylates the N7 position of guanine in position 527 of 16S rRNA. The polypeptide is Ribosomal RNA small subunit methyltransferase G (Anaeromyxobacter dehalogenans (strain 2CP-1 / ATCC BAA-258)).